A 356-amino-acid chain; its full sequence is Histidinol-phosphate aminotransferase (356 aa).

Position 214 is an N6-(pyridoxal phosphate)lysine (Lys214).

The protein belongs to the class-II pyridoxal-phosphate-dependent aminotransferase family. Histidinol-phosphate aminotransferase subfamily. As to quaternary structure, homodimer. Pyridoxal 5'-phosphate serves as cofactor.

It carries out the reaction L-histidinol phosphate + 2-oxoglutarate = 3-(imidazol-4-yl)-2-oxopropyl phosphate + L-glutamate. The protein operates within amino-acid biosynthesis; L-histidine biosynthesis; L-histidine from 5-phospho-alpha-D-ribose 1-diphosphate: step 7/9. In Shigella boydii serotype 18 (strain CDC 3083-94 / BS512), this protein is Histidinol-phosphate aminotransferase.